The following is a 309-amino-acid chain: p-hydroxybenzoic acid efflux pump subunit AaeA (309 aa).

Residues 12 to 32 (AITVVLVILAFIAIFNAWVYY) traverse the membrane as a helical segment.

Belongs to the membrane fusion protein (MFP) (TC 8.A.1) family.

The protein resides in the cell inner membrane. Forms an efflux pump with AaeB. This is p-hydroxybenzoic acid efflux pump subunit AaeA from Escherichia coli O157:H7.